Consider the following 366-residue polypeptide: MSGNTYGKLFTVTTFGESHGAALGCIVDGCPPGLELSEQDIQIDLDRRKPGQSRYTTQRREDDQVKILSGVFEGKTTGTPIGMLIENTDQRSKDYSNIKDQFRPAHADYTYMQKYGVRDYRGGGRSSARETAMRVAAGAIAKKYLKDFHGIEVRGYLSQLGPVKIETVDWDQVDQNPFFCPDASKVPAMEEFMKTLNKEGDSIGAKITVVATGVPPGLGEPIFDRLDAEIAHALMSINAVKGVEIGEGFAVVEQRGSKHRDEITPEGFLSNNAGGILGGISSGQDIIANIALKPTSSLHIPGRSVDVHGNPVEVVTKGRHDPCVGIRATPIAEAMLALVLMDHLLRHRGQNGGVQHRIPVIPASAK.

NADP(+) is bound by residues arginine 48 and arginine 54. FMN is bound by residues 125-127 (RSS), 238-239 (NA), glycine 278, 293-297 (KPTSS), and arginine 319.

The protein belongs to the chorismate synthase family. As to quaternary structure, homotetramer. FMNH2 serves as cofactor.

The enzyme catalyses 5-O-(1-carboxyvinyl)-3-phosphoshikimate = chorismate + phosphate. It functions in the pathway metabolic intermediate biosynthesis; chorismate biosynthesis; chorismate from D-erythrose 4-phosphate and phosphoenolpyruvate: step 7/7. In terms of biological role, catalyzes the anti-1,4-elimination of the C-3 phosphate and the C-6 proR hydrogen from 5-enolpyruvylshikimate-3-phosphate (EPSP) to yield chorismate, which is the branch point compound that serves as the starting substrate for the three terminal pathways of aromatic amino acid biosynthesis. This reaction introduces a second double bond into the aromatic ring system. The sequence is that of Chorismate synthase from Cellvibrio japonicus (strain Ueda107) (Pseudomonas fluorescens subsp. cellulosa).